We begin with the raw amino-acid sequence, 282 residues long: Sulfur carrier protein FdhD (282 aa).

The active-site Cysteine persulfide intermediate is the cysteine 126. Mo-bis(molybdopterin guanine dinucleotide) is bound at residue 265–270; sequence FVRNNR.

The protein belongs to the FdhD family.

It localises to the cytoplasm. Required for formate dehydrogenase (FDH) activity. Acts as a sulfur carrier protein that transfers sulfur from IscS to the molybdenum cofactor prior to its insertion into FDH. This chain is Sulfur carrier protein FdhD, found in Thermoplasma acidophilum (strain ATCC 25905 / DSM 1728 / JCM 9062 / NBRC 15155 / AMRC-C165).